Here is a 710-residue protein sequence, read N- to C-terminus: Pentatricopeptide repeat-containing protein At3g14330 (710 aa).

PPR repeat units lie at residues N166–S196, T200–P234, G235–V269, D270–T304, W305–E331, S336–P370, D371–K401, D402–P436, D437–E467, and A473–K503. The type E motif stretch occupies residues I508–K583. The type E(+) motif stretch occupies residues D584–E615. Residues K616–W710 are type DYW motif.

This sequence belongs to the PPR family. PCMP-H subfamily.

The polypeptide is Pentatricopeptide repeat-containing protein At3g14330 (PCMP-H57) (Arabidopsis thaliana (Mouse-ear cress)).